The chain runs to 90 residues: Sec-independent protein translocase protein TatA (90 aa).

A helical transmembrane segment spans residues 2 to 22; the sequence is GVGGISIWQLLIVLVIILLLF. Basic and acidic residues-rich tracts occupy residues 45-68 and 76-90; these read LRDE…HKAE and ADAD…DEHK. The segment at 45 to 90 is disordered; that stretch reads LRDEERRDAEEAATIEHKQAHKAENPSQRQQADADFKIKSGNDEHK.

It belongs to the TatA/E family. In terms of assembly, the Tat system comprises two distinct complexes: a TatABC complex, containing multiple copies of TatA, TatB and TatC subunits, and a separate TatA complex, containing only TatA subunits. Substrates initially bind to the TatABC complex, which probably triggers association of the separate TatA complex to form the active translocon.

The protein resides in the cell inner membrane. In terms of biological role, part of the twin-arginine translocation (Tat) system that transports large folded proteins containing a characteristic twin-arginine motif in their signal peptide across membranes. TatA could form the protein-conducting channel of the Tat system. This chain is Sec-independent protein translocase protein TatA, found in Nitrosococcus oceani (strain ATCC 19707 / BCRC 17464 / JCM 30415 / NCIMB 11848 / C-107).